We begin with the raw amino-acid sequence, 296 residues long: Protein csh3 (296 aa).

The segment at 46-138 is disordered; it reads ASPVTAPAAQ…PPSYPGPNTA (93 aa). Over residues 93-103 the composition is skewed to basic and acidic residues; it reads GEKRTPEEPRK. Over residues 111–124 the composition is skewed to polar residues; the sequence is QKQSEASSVNSSTE. The region spanning 140 to 199 is the SH3 domain; that stretch reads KNVERVLAMYDFPGPDAGDLGFHAGEVIIVLEHVNNDWWRGELNGKEGIFPSNYVRLLED. Positions 202-246 are disordered; it reads VKAQPPPPPPQQNYPPAASSSAPPMQYQQTAYPPQQAPYPPVQAY. Pro residues predominate over residues 205 to 214; the sequence is QPPPPPPQQN. The span at 215-235 shows a compositional bias: low complexity; the sequence is YPPAASSSAPPMQYQQTAYPP.

The sequence is that of Protein csh3 (csh3) from Schizosaccharomyces pombe (strain 972 / ATCC 24843) (Fission yeast).